Consider the following 335-residue polypeptide: Biotin synthase (335 aa).

Residues Tyr46–Arg274 enclose the Radical SAM core domain. Positions 61, 65, and 68 each coordinate [4Fe-4S] cluster. 4 residues coordinate [2Fe-2S] cluster: Cys105, Cys137, Cys197, and Arg269.

The protein belongs to the radical SAM superfamily. Biotin synthase family. In terms of assembly, homodimer. Requires [4Fe-4S] cluster as cofactor. [2Fe-2S] cluster is required as a cofactor.

It carries out the reaction (4R,5S)-dethiobiotin + (sulfur carrier)-SH + 2 reduced [2Fe-2S]-[ferredoxin] + 2 S-adenosyl-L-methionine = (sulfur carrier)-H + biotin + 2 5'-deoxyadenosine + 2 L-methionine + 2 oxidized [2Fe-2S]-[ferredoxin]. The protein operates within cofactor biosynthesis; biotin biosynthesis; biotin from 7,8-diaminononanoate: step 2/2. Catalyzes the conversion of dethiobiotin (DTB) to biotin by the insertion of a sulfur atom into dethiobiotin via a radical-based mechanism. The chain is Biotin synthase from Prochlorococcus marinus (strain MIT 9215).